Reading from the N-terminus, the 2494-residue chain is Nuclear receptor corepressor 1 (2494 aa).

Polar residues predominate over residues 1–33; that stretch reads MSSSGYPPNQGAFSTEQGRYSSHPVQYTFPSSR. 4 disordered regions span residues 1 to 38, 53 to 106, 134 to 170, and 198 to 222; these read MSSS…QQEF, LLQQ…PRLD, SEVK…KLSK, and QQQL…PVEQ. The span at 71 to 82 shows a compositional bias: basic and acidic residues; it reads PVSDRPQDRRQG. Residues 83–92 are compositionally biased toward polar residues; it reads YEQQYHSVTQ. Basic and acidic residues-rich tracts occupy residues 93 to 106, 134 to 148, and 204 to 213; these read NEHE…PRLD, SEVK…KHET, and EAAKPPEPEK. Positions 154-304 are interaction with tbl1xr1; sequence SGQPGEEQEA…REQNICQRYD (151 aa). Residues 168–208 are a coiled coil; that stretch reads LSKEELIQSMDRVDREIAKVEQQILKLKKKQQQLEEEAAKP. The SANT 1 domain maps to 427–478; that stretch reads QFMNVWTDHEKEIFKEKFVQHPKNFGLIASYLERKTVSDCVLYYYLTKKNEN. 8 disordered regions span residues 488–638, 671–913, 981–1007, 1081–1124, 1413–1434, 1488–1585, 1745–1845, and 1912–1987; these read PKRR…VEHG, NLLQ…LDSK, RQRQ…PNMD, GARL…GTPG, IHEI…ESSR, MGER…TQRE, LAFP…QESI, and EVVK…AHTK. Basic and acidic residues-rich tracts occupy residues 502 to 525 and 535 to 548; these read AQEE…KEEE and KEEL…RTDA. Positions 502-549 form a coiled coil; it reads AQEEKEIEKVEEEKAERNDKKEEERREEEEKEEKEELRDGTKDRTDAI. A compositionally biased stretch (low complexity) spans 582-616; sequence ASEAAAAANAASTATTAPATTTSTTATTTTAALVP. Pro residues predominate over residues 617–629; it reads VAPPPEEPTPPPT. The 47-residue stretch at 622-668 folds into the SANT 2 domain; the sequence is EEPTPPPTQEQSLVEHGRNWGAIAKMVGSKSESQCKNFYFNYKRRHN. Residues 692–702 are compositionally biased toward polar residues; the sequence is QCESVASTVSA. The stretch at 698-726 forms a coiled coil; the sequence is STVSAQEDEENEASNEEENAEDSEGAENS. Residues 703 to 722 are compositionally biased toward acidic residues; sequence QEDEENEASNEEENAEDSEG. The span at 723–741 shows a compositional bias: low complexity; the sequence is AENSSDTESAPSPSPAEAA. Polar residues predominate over residues 766–779; the sequence is ASKSVSDSSPTPTV. Residues 829 to 864 show a composition bias toward basic and acidic residues; it reads AEPDEVESKPSESAEVKIEEDTKDQDMERLMDRAEA. Composition is skewed to polar residues over residues 881 to 892, 993 to 1004, and 1104 to 1124; these read ESQSDNDSSATC, MSASPGNMSKSP, and ATSS…GTPG. The segment covering 1488 to 1504 has biased composition (basic and acidic residues); it reads MGERSKYEDTKSSEAIR. A compositionally biased stretch (polar residues) spans 1508-1519; sequence TSVVSSGPSVLR. Residues 1548–1561 are compositionally biased toward low complexity; the sequence is PSPMSRSSPMARSA. A coiled-coil region spans residues 1771–1810; that stretch reads VSAERERERERDRERDREREKEQRERERDRERERERLAAA. The span at 1773–1807 shows a compositional bias: basic and acidic residues; the sequence is AERERERERDRERDREREKEQRERERDRERERERL. Residues 1835–1845 are compositionally biased toward polar residues; it reads PSPSVRAQESI. Over residues 1914 to 1935 the composition is skewed to basic and acidic residues; the sequence is VKPKEMKHDPARSEESLSRRNV. Over residues 1953-1972 the composition is skewed to low complexity; sequence QSPYTSSSFSGSKSQGQPSP. Basic and acidic residues predominate over residues 1978–1987; sequence AGKEKTAHTK. The short motif at 2008–2012 is the CORNR box 1 element; that stretch reads IDVII. The interval 2018–2105 is disordered; the sequence is SDKDGRDRNS…PSPQQTIPGH (88 aa). The span at 2027 to 2036 shows a compositional bias: low complexity; that stretch reads SQSSDSSSSH. Positions 2039 to 2048 are enriched in basic and acidic residues; it reads HRYDAPRDTI. Positions 2088–2102 are enriched in polar residues; the sequence is RYRQQQESPSPQQTI. The CORNR box 2 motif lies at 2119–2123; sequence ICQII. Residues 2135 to 2177 show a composition bias toward polar residues; that stretch reads QALQQPPASTFQSTNPSSTPVRTKASSRFSPESQVQPVHNQRP. Residues 2135 to 2216 form a disordered region; that stretch reads QALQQPPAST…YEPISPPQAP (82 aa). Over residues 2186-2205 the composition is skewed to basic and acidic residues; sequence VLDRPRGRPGKSPDRGHISE. The short motif at 2322–2326 is the CORNR box 3 element; that stretch reads LEDII. Disordered regions lie at residues 2346 to 2413 and 2446 to 2494; these read GVAQ…SVHS and MLNS…DSDE. The segment covering 2376–2390 has biased composition (basic residues); the sequence is HKQKLISKYGSRKTK. Composition is skewed to polar residues over residues 2446 to 2472 and 2485 to 2494; these read MLNS…QQSR and QYETLSDSDE.

This sequence belongs to the N-CoR nuclear receptor corepressors family. Forms a large corepressor complex that contains sin3a/b, histone deacetylases hdac1 and hdac2, rbbp4 and possibly rbbp7. Interacts with the thyroid receptor (TR, composed of rxra and thrb) and the retinoid acid receptor (RAR, composed of rxra and rara) in the absence of ligand. Interacts with tbl1xr1. Interacts with zbtb33/kaiso.

It is found in the nucleus. In terms of biological role, mediates transcriptional repression by certain nuclear receptors. Participates in complexes which promote histone deacetylation and the formation of repressive chromatin structures which may impede access by the basal transcription machinery. In association with hdac3, may play a role in the regulation of the circadian clock. This Xenopus tropicalis (Western clawed frog) protein is Nuclear receptor corepressor 1 (ncor1).